Here is a 257-residue protein sequence, read N- to C-terminus: Enterotoxin type E (257 aa).

A signal peptide spans 1–27 (MKKTAFILLLFIALTLTTSPLVNGSEK). C120 and C130 form a disulfide bridge. H211, H249, and D251 together coordinate Zn(2+).

Belongs to the staphylococcal/streptococcal toxin family. As to quaternary structure, interacts with host MHC class II molecules composed of alpha/HLA-DRA and beta/HLA-DRB1 chains. Interacts with host T-cell receptor beta variable TRBV7-9. It depends on Zn(2+) as a cofactor.

The protein localises to the secreted. Its function is as follows. Staphylococcal enterotoxin that activates the host immune system by binding as unprocessed molecules to major histocompatibility (MHC) complex class II and T-cell receptor (TCR) molecules. In turn, this ternary complex activates a large number of T-lymphocytes initiating a systemic release of pro-inflammatory cytokines. Also causes the intoxication staphylococcal food poisoning syndrome. The sequence is that of Enterotoxin type E (entE) from Staphylococcus aureus.